The primary structure comprises 426 residues: Phosphomethylpyrimidine synthase (426 aa).

Substrate-binding positions include Asn-65, Met-94, Tyr-123, His-162, 184-186 (SRG), 225-228 (DGMR), and Glu-264. A Zn(2+)-binding site is contributed by His-268. A substrate-binding site is contributed by Tyr-291. His-332 provides a ligand contact to Zn(2+). Cys-408, Cys-411, and Cys-415 together coordinate [4Fe-4S] cluster.

It belongs to the ThiC family. It depends on [4Fe-4S] cluster as a cofactor.

The catalysed reaction is 5-amino-1-(5-phospho-beta-D-ribosyl)imidazole + S-adenosyl-L-methionine = 4-amino-2-methyl-5-(phosphooxymethyl)pyrimidine + CO + 5'-deoxyadenosine + formate + L-methionine + 3 H(+). It participates in cofactor biosynthesis; thiamine diphosphate biosynthesis. Its function is as follows. Catalyzes the synthesis of the hydroxymethylpyrimidine phosphate (HMP-P) moiety of thiamine from aminoimidazole ribotide (AIR) in a radical S-adenosyl-L-methionine (SAM)-dependent reaction. The chain is Phosphomethylpyrimidine synthase from Methanococcus maripaludis (strain DSM 14266 / JCM 13030 / NBRC 101832 / S2 / LL).